The primary structure comprises 962 residues: MASNSTKSFLADAGYGEQELDANSALMELDKGLRSGKLGEQCEAVVRFPRLFQKYPFPILINSAFLKLADVFRVGNNFLRLCVLKVTQQSEKHLEKILNVDEFVKRIFSVIHSNDPVARAITLRMLGSLASIIPERKNAHHSIRQSLDSHDNVEVEAAVFAAANFSAQSKDFAVGICNKISEMIQGLATPVDLKLKLIPILQHMHHDAILASSARQLLQQLVTAYPSTRMVIVSLHTFTLLAASSLVDTPKQIQLLLQYLKNDPRKAVKRLAIQDLKLLANKTPHTWSRENIQALCECALQTPYDSLKLGMLSVLATLSGTIAVKHYFSIASGNVGSSPRSSDLVKLAQECCYHNNRGIAAHGVRVLTNITVSCQEKDLLALEQDAVFGLESLLVLCSQDDSPGAQATLKIALNCMVKLAKGRPHLSQSVVETLLTQLHSAQDTARILMCHCLAAIAMQLPVLGDGMLGDLVELYKVIGRSATDKQQELLVSLATVIFVASQKALSAEVKAVIKQQLESVSNGWTVYRIARQASRMGNHDMARELYQTLLTQVASEHFYFWLNSLKEFSHAEQCLTGLQEENYSSALSCIAESLKFYHKGIASLTAASTPLNPLSFQCEFVKLRIDLLQAFSQLICTCNSLKTSPPPAIATTIAMTLGNDLQRCGRISNQMKLSMEEFRSLASRYGDLYQASFDADSATLRNVELQQQSCLLISHAIEALILDPESASFQEYGSTGAAHADSEYERRMMSVYNHVLEEVESLNRKYTPVSYMHTACLCNAIISLLKVPLSFQRYFFQKLQSTSIKLALSPSPRNPAEPIAVQNNQQLALKVEGVVQHGSKPGLFRRIQSVCLNVSSTLQSKSGQDYKIPIDNMTNEMEQRVEPHNDYFSTQFLLNFAILGTHNITVESSVKDANGIVWKTGPRTTIFVKSLEDPYSQQIRLQQQQAQQPLQQQQQRNAYTRF.

Residues Ser338 and Ser809 each carry the phosphoserine modification.

It belongs to the Integrator subunit 7 family. In terms of assembly, component of the Integrator complex, composed of core subunits INTS1, INTS2, INTS3, INTS4, INTS5, INTS6, INTS7, INTS8, INTS9/RC74, INTS10, INTS11/CPSF3L, INTS12, INTS13, INTS14 and INTS15. The core complex associates with protein phosphatase 2A subunits PPP2CA and PPP2R1A, to form the Integrator-PP2A (INTAC) complex. Interacts with NABP2.

It is found in the nucleus. Its subcellular location is the chromosome. The protein localises to the cytoplasm. In terms of biological role, component of the integrator complex, a multiprotein complex that terminates RNA polymerase II (Pol II) transcription in the promoter-proximal region of genes. The integrator complex provides a quality checkpoint during transcription elongation by driving premature transcription termination of transcripts that are unfavorably configured for transcriptional elongation: the complex terminates transcription by (1) catalyzing dephosphorylation of the C-terminal domain (CTD) of Pol II subunit POLR2A/RPB1 and SUPT5H/SPT5, (2) degrading the exiting nascent RNA transcript via endonuclease activity and (3) promoting the release of Pol II from bound DNA. The integrator complex is also involved in terminating the synthesis of non-coding Pol II transcripts, such as enhancer RNAs (eRNAs), small nuclear RNAs (snRNAs), telomerase RNAs and long non-coding RNAs (lncRNAs). May be not involved in the recruitment of cytoplasmic dynein to the nuclear envelope by different components of the INT complex. Plays a role in DNA damage response (DDR) signaling during the S phase. This chain is Integrator complex subunit 7 (INTS7), found in Bos taurus (Bovine).